A 312-amino-acid polypeptide reads, in one-letter code: Olfactory receptor-like protein COR6 (312 aa).

Residues 1–26 are Extracellular-facing; the sequence is MASGNCTTPTTFILSGLTDNPGLQMP. Asn-5 carries an N-linked (GlcNAc...) asparagine glycan. The chain crosses the membrane as a helical span at residues 27-49; sequence LFMVFLAIYTITLLTNLGLIALI. Over 50–57 the chain is Cytoplasmic; the sequence is SIDLQLQT. A helical membrane pass occupies residues 58–79; sequence PMYIFLQNLSFTDAVYSTVITP. Topologically, residues 80-100 are extracellular; it reads KMLATFLEETKTISYVGCILQ. An intrachain disulfide couples Cys-97 to Cys-179. Residues 101 to 120 form a helical membrane-spanning segment; it reads YFSFVLLTVRECLLLAVMAY. Residues 121-139 lie on the Cytoplasmic side of the membrane; it reads DRYAAICKPLLYPAIMTKA. A helical transmembrane segment spans residues 140 to 164; sequence VCWRLVKGLYSLAFLNFLVHTSGLL. Over 165–205 the chain is Extracellular; it reads KLSFCSSNVVNHFFCDNSPLFQISSSSTALNELLVFIFGSL. Residues 206–226 traverse the membrane as a helical segment; that stretch reads FVMSSIITILISYVFIILTVV. Over 227-239 the chain is Cytoplasmic; the sequence is RIRSKERKYKAFS. A helical transmembrane segment spans residues 240-260; the sequence is TCTSHLMAVSLFHGTIVFMYF. At 261–271 the chain is on the extracellular side; it reads QPANNFSLDKD. A helical membrane pass occupies residues 272–292; the sequence is KIMSLFYTVVIPMLNPLIYSW. Residues 293–312 lie on the Cytoplasmic side of the membrane; sequence RNKEVKDALHRAIATAVLFH.

It belongs to the G-protein coupled receptor 1 family.

Its subcellular location is the cell membrane. Odorant receptor. The protein is Olfactory receptor-like protein COR6 (COR6) of Gallus gallus (Chicken).